We begin with the raw amino-acid sequence, 166 residues long: Interleukin-3 (166 aa).

Residues 1 to 27 (MVLASSTTSILCMLLPLLMLFHQGLQI) form the signal peptide. 2 cysteine pairs are disulfide-bonded: Cys43–Cys106 and Cys105–Cys166. N-linked (GlcNAc...) asparagine glycosylation is found at Asn60 and Asn70. Positions 145–166 (SVSRPPQPTSSSDNFRPMTVEC) are disordered.

Belongs to the IL-3 family. In terms of assembly, monomer. As to expression, activated T-cells, mast cells, natural killer cells.

Its subcellular location is the secreted. Functionally, cytokine secreted predominantly by activated T-lymphocytes as well as mast cells and osteoblastic cells that controls the production and differentiation of hematopoietic progenitor cells into lineage-restricted cells. Also stimulates mature basophils, eosinophils, and monocytes to become functionally activated. In addition, plays an important role in neural cell proliferation and survival. Participates as well in bone homeostasis and inhibits osteoclast differentiation by preventing NF-kappa-B nuclear translocation and activation. Mechanistically, exerts its biological effects through a receptor composed of IL3RA subunit and a signal transducing subunit IL3RB. Receptor stimulation results in the rapid activation of JAK2 kinase activity leading to STAT5-mediated transcriptional program. Alternatively, contributes to cell survival under oxidative stress in non-hematopoietic systems by activating pathways mediated by PI3K/AKT and ERK. The polypeptide is Interleukin-3 (Il3) (Rattus norvegicus (Rat)).